The following is a 511-amino-acid chain: 2,3-bisphosphoglycerate-independent phosphoglycerate mutase (511 aa).

Aspartate 12 contributes to the Mn(2+) binding site. Tyrosine 36 carries the post-translational modification Phosphotyrosine. Serine 62 serves as a coordination point for Mn(2+). The Phosphoserine intermediate role is filled by serine 62. Substrate contacts are provided by residues histidine 123, 153–154, arginine 185, arginine 191, 261–264, and lysine 336; these read RD and RPDR. Aspartate 403, histidine 407, aspartate 444, histidine 445, and histidine 462 together coordinate Mn(2+).

The protein belongs to the BPG-independent phosphoglycerate mutase family. In terms of assembly, monomer. Mn(2+) serves as cofactor.

It carries out the reaction (2R)-2-phosphoglycerate = (2R)-3-phosphoglycerate. The protein operates within carbohydrate degradation; glycolysis; pyruvate from D-glyceraldehyde 3-phosphate: step 3/5. Essential for rapid growth and for sporulation. Catalyzes the interconversion of 2-phosphoglycerate and 3-phosphoglycerate. The sequence is that of 2,3-bisphosphoglycerate-independent phosphoglycerate mutase from Bacillus velezensis (strain DSM 23117 / BGSC 10A6 / LMG 26770 / FZB42) (Bacillus amyloliquefaciens subsp. plantarum).